An 853-amino-acid chain; its full sequence is uncharacterized protein (853 aa).

Coiled-coil stretches lie at residues 313–343 (RTDE…LKVA) and 480–528 (EGQV…SELI).

This is an uncharacterized protein from Ostreid herpesvirus 1 (isolate France) (OsHV-1).